Here is a 590-residue protein sequence, read N- to C-terminus: Glutamine--tRNA ligase (590 aa).

Residues 55 to 65 (PEPNGYLHIGH) carry the 'HIGH' region motif. Residues 56–58 (EPN) and 62–68 (HIGHAKS) each bind ATP. Aspartate 93 and tyrosine 238 together coordinate L-glutamine. Residues threonine 257 and 292 to 293 (RL) each bind ATP. Residues 299–303 (ITSKR) carry the 'KMSKS' region motif.

Belongs to the class-I aminoacyl-tRNA synthetase family. Monomer.

It is found in the cytoplasm. It carries out the reaction tRNA(Gln) + L-glutamine + ATP = L-glutaminyl-tRNA(Gln) + AMP + diphosphate. The sequence is that of Glutamine--tRNA ligase from Polynucleobacter necessarius subsp. necessarius (strain STIR1).